We begin with the raw amino-acid sequence, 630 residues long: Succinate dehydrogenase [ubiquinone] flavoprotein subunit, mitochondrial (630 aa).

The N-terminal 31 residues, 1 to 31, are a transit peptide targeting the mitochondrion; the sequence is MWRGCVSRGLRSLSKGKGSSSSAPVSAAARL. FAD-binding positions include 52–57, 75–90, and D260; these read GAGGAG and TKLF…AQGG. H83 is modified (tele-8alpha-FAD histidine). H281 and T293 together coordinate substrate. The active-site Proton acceptor is the R325. Residue H392 participates in substrate binding. E426 provides a ligand contact to FAD. Substrate is bound at residue R437. 442-443 is a binding site for FAD; that stretch reads SL.

This sequence belongs to the FAD-dependent oxidoreductase 2 family. FRD/SDH subfamily. In terms of assembly, component of complex II composed of eight subunits in plants: four classical SDH subunits SDH1, SDH2, SDH3 and SDH4 (a flavoprotein (FP), an iron-sulfur protein (IP), and a cytochrome b composed of a large and a small subunit.), as well as four subunits unknown in mitochondria from bacteria and heterotrophic eukaryotes. FAD is required as a cofactor.

It localises to the mitochondrion inner membrane. It catalyses the reaction a quinone + succinate = fumarate + a quinol. It participates in carbohydrate metabolism; tricarboxylic acid cycle; fumarate from succinate (eukaryal route): step 1/1. In terms of biological role, flavoprotein (FP) subunit of succinate dehydrogenase (SDH) that is involved in complex II of the mitochondrial electron transport chain and is responsible for transferring electrons from succinate to ubiquinone (coenzyme Q). The polypeptide is Succinate dehydrogenase [ubiquinone] flavoprotein subunit, mitochondrial (SDH1) (Oryza sativa subsp. japonica (Rice)).